The primary structure comprises 689 residues: tRNA 5-methylaminomethyl-2-thiouridine biosynthesis bifunctional protein MnmC (689 aa).

The interval 1-245 (MNQRPIQTAT…KREMLTGTLP (245 aa)) is tRNA (mnm(5)s(2)U34)-methyltransferase. Residues 270-689 (IGGGIVSALT…RSPATQESSR (420 aa)) form an FAD-dependent cmnm(5)s(2)U34 oxidoreductase region.

It in the N-terminal section; belongs to the methyltransferase superfamily. tRNA (mnm(5)s(2)U34)-methyltransferase family. In the C-terminal section; belongs to the DAO family. Requires FAD as cofactor.

Its subcellular location is the cytoplasm. The enzyme catalyses 5-aminomethyl-2-thiouridine(34) in tRNA + S-adenosyl-L-methionine = 5-methylaminomethyl-2-thiouridine(34) in tRNA + S-adenosyl-L-homocysteine + H(+). Functionally, catalyzes the last two steps in the biosynthesis of 5-methylaminomethyl-2-thiouridine (mnm(5)s(2)U) at the wobble position (U34) in tRNA. Catalyzes the FAD-dependent demodification of cmnm(5)s(2)U34 to nm(5)s(2)U34, followed by the transfer of a methyl group from S-adenosyl-L-methionine to nm(5)s(2)U34, to form mnm(5)s(2)U34. The sequence is that of tRNA 5-methylaminomethyl-2-thiouridine biosynthesis bifunctional protein MnmC from Yersinia pseudotuberculosis serotype O:1b (strain IP 31758).